Consider the following 472-residue polypeptide: Ribulose bisphosphate carboxylase large chain (472 aa).

Positions 120 and 170 each coordinate substrate. K172 serves as the catalytic Proton acceptor. Position 174 (K174) interacts with substrate. 3 residues coordinate Mg(2+): K198, D200, and E201. K198 carries the N6-carboxylysine modification. H291 functions as the Proton acceptor in the catalytic mechanism. Substrate is bound by residues R292, H324, and S376.

Belongs to the RuBisCO large chain family. Type I subfamily. Heterohexadecamer of 8 large chains and 8 small chains. It depends on Mg(2+) as a cofactor.

The protein localises to the carboxysome. It carries out the reaction 2 (2R)-3-phosphoglycerate + 2 H(+) = D-ribulose 1,5-bisphosphate + CO2 + H2O. The catalysed reaction is D-ribulose 1,5-bisphosphate + O2 = 2-phosphoglycolate + (2R)-3-phosphoglycerate + 2 H(+). Its function is as follows. RuBisCO catalyzes two reactions: the carboxylation of D-ribulose 1,5-bisphosphate, the primary event in carbon dioxide fixation, as well as the oxidative fragmentation of the pentose substrate in the photorespiration process. Both reactions occur simultaneously and in competition at the same active site. The protein is Ribulose bisphosphate carboxylase large chain of Gloeothece citriformis (strain PCC 7424) (Cyanothece sp. (strain PCC 7424)).